The chain runs to 363 residues: Probable dual-specificity RNA methyltransferase RlmN (363 aa).

E99 functions as the Proton acceptor in the catalytic mechanism. Positions 105 to 341 constitute a Radical SAM core domain; it reads SENRMTACVS…VTVRKSHGAS (237 aa). Residues C112 and C346 are joined by a disulfide bond. C119, C123, and C126 together coordinate [4Fe-4S] cluster. S-adenosyl-L-methionine-binding positions include 171–172, S204, 227–229, and N303; these read GE and SLH. Catalysis depends on C346, which acts as the S-methylcysteine intermediate.

The protein belongs to the radical SAM superfamily. RlmN family. [4Fe-4S] cluster is required as a cofactor.

The protein localises to the cytoplasm. The catalysed reaction is adenosine(2503) in 23S rRNA + 2 reduced [2Fe-2S]-[ferredoxin] + 2 S-adenosyl-L-methionine = 2-methyladenosine(2503) in 23S rRNA + 5'-deoxyadenosine + L-methionine + 2 oxidized [2Fe-2S]-[ferredoxin] + S-adenosyl-L-homocysteine. It carries out the reaction adenosine(37) in tRNA + 2 reduced [2Fe-2S]-[ferredoxin] + 2 S-adenosyl-L-methionine = 2-methyladenosine(37) in tRNA + 5'-deoxyadenosine + L-methionine + 2 oxidized [2Fe-2S]-[ferredoxin] + S-adenosyl-L-homocysteine. In terms of biological role, specifically methylates position 2 of adenine 2503 in 23S rRNA and position 2 of adenine 37 in tRNAs. This is Probable dual-specificity RNA methyltransferase RlmN from Chlorobium phaeobacteroides (strain DSM 266 / SMG 266 / 2430).